The sequence spans 184 residues: ATP synthase subunit b, chloroplastic (184 aa).

A helical membrane pass occupies residues 27 to 49 (LATNPINLSVVLGVLVFFGKGVL).

It belongs to the ATPase B chain family. As to quaternary structure, F-type ATPases have 2 components, F(1) - the catalytic core - and F(0) - the membrane proton channel. F(1) has five subunits: alpha(3), beta(3), gamma(1), delta(1), epsilon(1). F(0) has four main subunits: a(1), b(1), b'(1) and c(10-14). The alpha and beta chains form an alternating ring which encloses part of the gamma chain. F(1) is attached to F(0) by a central stalk formed by the gamma and epsilon chains, while a peripheral stalk is formed by the delta, b and b' chains.

Its subcellular location is the plastid. It is found in the chloroplast thylakoid membrane. In terms of biological role, f(1)F(0) ATP synthase produces ATP from ADP in the presence of a proton or sodium gradient. F-type ATPases consist of two structural domains, F(1) containing the extramembraneous catalytic core and F(0) containing the membrane proton channel, linked together by a central stalk and a peripheral stalk. During catalysis, ATP synthesis in the catalytic domain of F(1) is coupled via a rotary mechanism of the central stalk subunits to proton translocation. Its function is as follows. Component of the F(0) channel, it forms part of the peripheral stalk, linking F(1) to F(0). The polypeptide is ATP synthase subunit b, chloroplastic (Phaseolus vulgaris (Kidney bean)).